Consider the following 545-residue polypeptide: Chaperonin GroEL 2 (545 aa).

ATP is bound by residues 29 to 32 (TLGP), 86 to 90 (DGTTT), G413, 479 to 481 (NAA), and D495.

Belongs to the chaperonin (HSP60) family. Forms a cylinder of 14 subunits composed of two heptameric rings stacked back-to-back. Interacts with the co-chaperonin GroES.

The protein resides in the cytoplasm. The catalysed reaction is ATP + H2O + a folded polypeptide = ADP + phosphate + an unfolded polypeptide.. Its function is as follows. Together with its co-chaperonin GroES, plays an essential role in assisting protein folding. The GroEL-GroES system forms a nano-cage that allows encapsulation of the non-native substrate proteins and provides a physical environment optimized to promote and accelerate protein folding. The protein is Chaperonin GroEL 2 of Prochlorococcus marinus (strain SARG / CCMP1375 / SS120).